Consider the following 194-residue polypeptide: Ferredoxin, apicoplast (194 aa).

The transit peptide at 1–19 directs the protein to the apicoplast; that stretch reads MNIVILLLILTFSIKHSNT. In terms of domain architecture, 2Fe-2S ferredoxin-type spans 99 to 189; it reads YNITLRTNDG…DCVIETHKED (91 aa). [2Fe-2S] cluster is bound by residues cysteine 135, cysteine 140, cysteine 143, and cysteine 173.

Belongs to the 2Fe2S plant-type ferredoxin family. [2Fe-2S] cluster serves as cofactor.

The protein resides in the plastid. Its subcellular location is the apicoplast. In terms of biological role, ferredoxins are iron-sulfur proteins that transfer electrons in a wide variety of metabolic reactions. By transferring electrons to 4-hydroxy-3-methylbut-2-enyl diphosphate reductase LytB/IspH, plays a role in the terminal step of the DOXP/MEP pathway for isoprenoid precursor biosynthesis. This is Ferredoxin, apicoplast from Plasmodium falciparum (isolate 3D7).